Here is a 499-residue protein sequence, read N- to C-terminus: Cytochrome P450 81E8 (499 aa).

Residues 3-23 traverse the membrane as a helical segment; the sequence is TFYLSLIISLFFLIITLKVFF. Cys436 contributes to the heme binding site.

Belongs to the cytochrome P450 family. The cofactor is heme.

The protein resides in the membrane. Functionally, probable monooxygenases exhibiting no activity with isoflavones such as formononetin, biochanin A, pseudobaptigenin, daidzein, genistein, isoformononetin and prunetin, or with flavonoids including naringenin, liquiritigenin, apigenin, luteolin, or kaempferol. This Medicago truncatula (Barrel medic) protein is Cytochrome P450 81E8.